The sequence spans 59 residues: MIVLGWMFFVGLVCYMGTFPELMPPTLKWQERWPVQESKTQLRRRALGEDLLQNHVEGI.

Topologically, residues 1–6 (MIVLGW) are mitochondrial intermembrane. 2 helical membrane-spanning segments follow: residues 2 to 22 (IVLG…FPEL) and 7 to 23 (MFFV…PELM). At 24-40 (PPTLKWQERWPVQESKT) the chain is on the cytoplasmic side.

Interacts with VDAC3.

Its subcellular location is the mitochondrion outer membrane. Regulates sperm development. May be involved in mitochondrial sheath formation. The protein is Mitochondrial sheath formation-associated protein of Homo sapiens (Human).